The following is a 336-amino-acid chain: Dihydroorotate dehydrogenase (quinone) (336 aa).

Residues 62 to 66 (AGLDK) and Thr-86 contribute to the FMN site. Lys-66 is a binding site for substrate. 111 to 115 (NRMGF) is a binding site for substrate. Residues Asn-139 and Asn-172 each contribute to the FMN site. Residue Asn-172 participates in substrate binding. Catalysis depends on Ser-175, which acts as the Nucleophile. Asn-177 is a substrate binding site. FMN-binding residues include Lys-217 and Thr-245. 246–247 (NT) provides a ligand contact to substrate. FMN is bound by residues Gly-268, Gly-297, and 318-319 (YS).

Belongs to the dihydroorotate dehydrogenase family. Type 2 subfamily. Monomer. The cofactor is FMN.

Its subcellular location is the cell membrane. The enzyme catalyses (S)-dihydroorotate + a quinone = orotate + a quinol. Its pathway is pyrimidine metabolism; UMP biosynthesis via de novo pathway; orotate from (S)-dihydroorotate (quinone route): step 1/1. In terms of biological role, catalyzes the conversion of dihydroorotate to orotate with quinone as electron acceptor. In Sodalis glossinidius (strain morsitans), this protein is Dihydroorotate dehydrogenase (quinone).